The following is a 541-amino-acid chain: Malate synthase (541 aa).

Residue Arg172 is the Proton acceptor of the active site. The active-site Proton donor is the Asp452.

The protein belongs to the malate synthase family.

It is found in the cytoplasm. The enzyme catalyses glyoxylate + acetyl-CoA + H2O = (S)-malate + CoA + H(+). The protein operates within carbohydrate metabolism; glyoxylate cycle; (S)-malate from isocitrate: step 2/2. In Myxococcus xanthus (strain DK1622), this protein is Malate synthase (mls).